The sequence spans 346 residues: Coproporphyrin III ferrochelatase (346 aa).

The Fe-coproporphyrin III site is built by Ser-52 and Tyr-121. Fe(2+)-binding residues include His-181 and Glu-264.

It belongs to the ferrochelatase family.

It localises to the cytoplasm. It catalyses the reaction Fe-coproporphyrin III + 2 H(+) = coproporphyrin III + Fe(2+). The protein operates within porphyrin-containing compound metabolism; protoheme biosynthesis. Involved in coproporphyrin-dependent heme b biosynthesis. Catalyzes the insertion of ferrous iron into coproporphyrin III to form Fe-coproporphyrin III. This Mycobacterium sp. (strain JLS) protein is Coproporphyrin III ferrochelatase.